We begin with the raw amino-acid sequence, 220 residues long: 3-keto-L-gulonate-6-phosphate decarboxylase SgbH (220 aa).

Substrate is bound at residue Asp11. Mg(2+) is bound by residues Glu33 and Asp62. Position 192 (Arg192) interacts with substrate.

Belongs to the HPS/KGPDC family. KGPDC subfamily. In terms of assembly, homodimer. It depends on Mg(2+) as a cofactor.

The catalysed reaction is 3-dehydro-L-gulonate 6-phosphate + H(+) = L-xylulose 5-phosphate + CO2. Functionally, catalyzes the decarboxylation of 3-keto-L-gulonate-6-P into L-xylulose-5-P. May be involved in the utilization of 2,3-diketo-L-gulonate. This is 3-keto-L-gulonate-6-phosphate decarboxylase SgbH (sgbH) from Escherichia coli (strain K12).